Here is a 147-residue protein sequence, read N- to C-terminus: Phosphoribosyl-AMP cyclohydrolase (147 aa).

D91 lines the Mg(2+) pocket. C92 provides a ligand contact to Zn(2+). Residues D93 and D95 each contribute to the Mg(2+) site. Residues C109 and C116 each contribute to the Zn(2+) site.

It belongs to the PRA-CH family. As to quaternary structure, homodimer. Mg(2+) is required as a cofactor. Requires Zn(2+) as cofactor.

It localises to the cytoplasm. The catalysed reaction is 1-(5-phospho-beta-D-ribosyl)-5'-AMP + H2O = 1-(5-phospho-beta-D-ribosyl)-5-[(5-phospho-beta-D-ribosylamino)methylideneamino]imidazole-4-carboxamide. It functions in the pathway amino-acid biosynthesis; L-histidine biosynthesis; L-histidine from 5-phospho-alpha-D-ribose 1-diphosphate: step 3/9. Catalyzes the hydrolysis of the adenine ring of phosphoribosyl-AMP. In Rhodopseudomonas palustris (strain BisB18), this protein is Phosphoribosyl-AMP cyclohydrolase.